A 337-amino-acid chain; its full sequence is Glyceraldehyde-3-phosphate dehydrogenase (337 aa).

NAD(+) contacts are provided by residues 12-13 (RI), aspartate 34, and arginine 79. D-glyceraldehyde 3-phosphate-binding positions include 150–152 (SCT), threonine 181, 210–211 (TG), and arginine 233. Catalysis depends on cysteine 151, which acts as the Nucleophile. NAD(+) is bound at residue asparagine 315.

The protein belongs to the glyceraldehyde-3-phosphate dehydrogenase family. In terms of assembly, homotetramer.

Its subcellular location is the cytoplasm. It catalyses the reaction D-glyceraldehyde 3-phosphate + phosphate + NAD(+) = (2R)-3-phospho-glyceroyl phosphate + NADH + H(+). The protein operates within carbohydrate degradation; glycolysis; pyruvate from D-glyceraldehyde 3-phosphate: step 1/5. This Omphalotus olearius (Jack o'lantern) protein is Glyceraldehyde-3-phosphate dehydrogenase (GPD).